Reading from the N-terminus, the 218-residue chain is Probable nicotinate-nucleotide adenylyltransferase (218 aa).

It belongs to the NadD family.

The enzyme catalyses nicotinate beta-D-ribonucleotide + ATP + H(+) = deamido-NAD(+) + diphosphate. It functions in the pathway cofactor biosynthesis; NAD(+) biosynthesis; deamido-NAD(+) from nicotinate D-ribonucleotide: step 1/1. In terms of biological role, catalyzes the reversible adenylation of nicotinate mononucleotide (NaMN) to nicotinic acid adenine dinucleotide (NaAD). This is Probable nicotinate-nucleotide adenylyltransferase from Halorhodospira halophila (strain DSM 244 / SL1) (Ectothiorhodospira halophila (strain DSM 244 / SL1)).